The sequence spans 102 residues: MRQVTIPLIQSKSMFCVIYRSSKRDQTYLYVEKKDDFSRVPEALMKGFGQPQLAMMLPLDGRKKLVNAELEKVKQALSEQGYYLQLPPPPEDLLKQHLSSVG.

The 85-residue stretch at 14 to 98 (MFCVIYRSSK…PPEDLLKQHL (85 aa)) folds into the YcgL domain.

This chain is Protein YcgL, found in Salmonella agona (strain SL483).